Consider the following 812-residue polypeptide: Valine--tRNA ligase (812 aa).

Residues 46-56 (PTVSGQLHIGH) carry the 'HIGH' region motif. The 'KMSKS' region motif lies at 536–540 (KMSKS). Lys-539 serves as a coordination point for ATP.

Belongs to the class-I aminoacyl-tRNA synthetase family. ValS type 2 subfamily. As to quaternary structure, monomer.

Its subcellular location is the cytoplasm. It catalyses the reaction tRNA(Val) + L-valine + ATP = L-valyl-tRNA(Val) + AMP + diphosphate. Catalyzes the attachment of valine to tRNA(Val). As ValRS can inadvertently accommodate and process structurally similar amino acids such as threonine, to avoid such errors, it has a 'posttransfer' editing activity that hydrolyzes mischarged Thr-tRNA(Val) in a tRNA-dependent manner. The chain is Valine--tRNA ligase from Rickettsia conorii (strain ATCC VR-613 / Malish 7).